The sequence spans 183 residues: Putative manganese efflux pump MntP 1 (183 aa).

Helical transmembrane passes span 6–26 (LFLLALAISLDAFGVILCIGI), 36–56 (IIFVFSFGFFQFFLSFLGGYI), 64–84 (IVPIPTIVGGLIIIIVGILMI), 100–120 (IMYLILGVSVSIDALVIGFTT), 130–150 (LFMSSLFMGLIATIICSLGII), and 158–178 (ISIISSYADYIGGIILILFGL).

The protein belongs to the MntP (TC 9.B.29) family.

The protein resides in the cell membrane. Probably functions as a manganese efflux pump. This is Putative manganese efflux pump MntP 1 from Clostridium botulinum (strain Langeland / NCTC 10281 / Type F).